The primary structure comprises 218 residues: Ribose-5-phosphate isomerase A (218 aa).

Residues 28–31 (TGST), 81–84 (DGAD), and 94–97 (KGGG) contribute to the substrate site. Catalysis depends on E103, which acts as the Proton acceptor. Position 121 (K121) interacts with substrate.

It belongs to the ribose 5-phosphate isomerase family. As to quaternary structure, homodimer.

The catalysed reaction is aldehydo-D-ribose 5-phosphate = D-ribulose 5-phosphate. It functions in the pathway carbohydrate degradation; pentose phosphate pathway; D-ribose 5-phosphate from D-ribulose 5-phosphate (non-oxidative stage): step 1/1. Catalyzes the reversible conversion of ribose-5-phosphate to ribulose 5-phosphate. The polypeptide is Ribose-5-phosphate isomerase A (Alcanivorax borkumensis (strain ATCC 700651 / DSM 11573 / NCIMB 13689 / SK2)).